Reading from the N-terminus, the 497-residue chain is Lysine--tRNA ligase (497 aa).

Mg(2+) is bound by residues Glu405 and Glu412.

This sequence belongs to the class-II aminoacyl-tRNA synthetase family. In terms of assembly, homodimer. The cofactor is Mg(2+).

The protein localises to the cytoplasm. It carries out the reaction tRNA(Lys) + L-lysine + ATP = L-lysyl-tRNA(Lys) + AMP + diphosphate. This Gloeobacter violaceus (strain ATCC 29082 / PCC 7421) protein is Lysine--tRNA ligase.